Here is a 497-residue protein sequence, read N- to C-terminus: 3-octaprenyl-4-hydroxybenzoate carboxy-lyase (497 aa).

Asn-175 lines the Mn(2+) pocket. Prenylated FMN contacts are provided by residues 178–180, 192–194, and 197–198; these read IYR, RWL, and RG. Glu-241 contacts Mn(2+). The active-site Proton donor is Asp-290.

The protein belongs to the UbiD family. As to quaternary structure, homohexamer. It depends on prenylated FMN as a cofactor. Mn(2+) serves as cofactor.

The protein resides in the cell membrane. It carries out the reaction a 4-hydroxy-3-(all-trans-polyprenyl)benzoate + H(+) = a 2-(all-trans-polyprenyl)phenol + CO2. The protein operates within cofactor biosynthesis; ubiquinone biosynthesis. Functionally, catalyzes the decarboxylation of 3-octaprenyl-4-hydroxy benzoate to 2-octaprenylphenol, an intermediate step in ubiquinone biosynthesis. The protein is 3-octaprenyl-4-hydroxybenzoate carboxy-lyase of Shigella sonnei (strain Ss046).